The primary structure comprises 165 residues: UPF0669 protein v1g209471 (165 aa).

The N-terminal stretch at 1–23 is a signal peptide; the sequence is MQGRYSAPLFLLLWLFFLHGTLC. Asn-38 carries N-linked (GlcNAc...) asparagine glycosylation.

Belongs to the UPF0669 family.

The protein resides in the secreted. This chain is UPF0669 protein v1g209471, found in Nematostella vectensis (Starlet sea anemone).